The chain runs to 808 residues: Phospholipase D alpha 1 (808 aa).

Residues 1-125 (MAHYLMHGTL…IRGDQVDRWV (125 aa)) enclose the C2 domain. A Ca(2+)-binding site is contributed by D186. The 39-residue stretch at 326 to 364 (TMFTHHQKIVVVDGEMPSGESQMRRIVSFVGGIDLCDGR) folds into the PLD phosphodiesterase 1 domain. Active-site residues include H331, K333, and D338. H331 serves as a coordination point for a 1,2-diacyl-sn-glycero-3-phosphate. The Ca(2+) site is built by H370 and H404. Residues Q520 and H659 each coordinate a 1,2-diacyl-sn-glycero-3-phosphate. The region spanning 654-681 (FMIYVHTKMMIVDDEYIIVGSANINQRS) is the PLD phosphodiesterase 2 domain. Active-site residues include H659, K661, and D666. Residue E720 participates in Ca(2+) binding.

This sequence belongs to the phospholipase D family. C2-PLD subfamily. Ca(2+) serves as cofactor.

It catalyses the reaction a 1,2-diacyl-sn-glycero-3-phosphocholine + H2O = a 1,2-diacyl-sn-glycero-3-phosphate + choline + H(+). In terms of biological role, hydrolyzes glycerol-phospholipids at the terminal phosphodiesteric bond. Plays an important role in various cellular processes. In Carica papaya (Papaya), this protein is Phospholipase D alpha 1.